A 95-amino-acid chain; its full sequence is UPF0213 protein YPA_2977 (95 aa).

The GIY-YIG domain occupies Ser4–Lys79.

The protein belongs to the UPF0213 family.

In Yersinia pestis bv. Antiqua (strain Antiqua), this protein is UPF0213 protein YPA_2977.